We begin with the raw amino-acid sequence, 100 residues long: Urease subunit gamma (100 aa).

It belongs to the urease gamma subunit family. In terms of assembly, heterotrimer of UreA (gamma), UreB (beta) and UreC (alpha) subunits. Three heterotrimers associate to form the active enzyme.

It localises to the cytoplasm. It carries out the reaction urea + 2 H2O + H(+) = hydrogencarbonate + 2 NH4(+). It functions in the pathway nitrogen metabolism; urea degradation; CO(2) and NH(3) from urea (urease route): step 1/1. This is Urease subunit gamma from Mycolicibacterium smegmatis (strain ATCC 700084 / mc(2)155) (Mycobacterium smegmatis).